A 111-amino-acid polypeptide reads, in one-letter code: Heavy metal-associated isoprenylated plant protein 10 (111 aa).

The region spanning 1–68 is the HMA domain; sequence MQETVVFEWG…ICDYVDITAV (68 aa). The disordered stretch occupies residues 68 to 111; sequence VGPEGQPAQNRNPVKKPEPKVIRGRPYPPQKKTPGKNSDECIIL. The residue at position 108 (cysteine 108) is a Cysteine methyl ester. Cysteine 108 carries the S-farnesyl cysteine lipid modification. Residues 109–111 constitute a propeptide, removed in mature form; the sequence is IIL.

The protein belongs to the HIPP family.

Functionally, probable heavy-metal-binding protein. The sequence is that of Heavy metal-associated isoprenylated plant protein 10 from Arabidopsis thaliana (Mouse-ear cress).